We begin with the raw amino-acid sequence, 455 residues long: Protein YmfN (455 aa).

This sequence belongs to the phage terminase family.

This chain is Protein YmfN (ymfN), found in Escherichia coli (strain K12).